The primary structure comprises 708 residues: Serine/threonine-protein kinase Nek5 (708 aa).

A Protein kinase domain is found at 4-259 (YDVIKAIGQG…INSILKRPFL (256 aa)). ATP-binding positions include 10–18 (IGQGAFGKA) and lysine 33. Aspartate 128 acts as the Proton acceptor in catalysis. 2 disordered regions span residues 376 to 403 (SYHP…PSQW) and 423 to 454 (KQLG…FQEL). Residues 440–454 (QELRSNGEEPRFQEL) show a composition bias toward basic and acidic residues.

The protein belongs to the protein kinase superfamily. NEK Ser/Thr protein kinase family. NIMA subfamily. It depends on Mg(2+) as a cofactor.

It is found in the cell projection. The protein resides in the cilium. Its subcellular location is the flagellum. It catalyses the reaction L-seryl-[protein] + ATP = O-phospho-L-seryl-[protein] + ADP + H(+). The catalysed reaction is L-threonyl-[protein] + ATP = O-phospho-L-threonyl-[protein] + ADP + H(+). This chain is Serine/threonine-protein kinase Nek5 (NEK5), found in Homo sapiens (Human).